The chain runs to 577 residues: Zinc finger-containing ubiquitin peptidase 1 (577 aa).

The segment at 2–24 (LSCDICGETVTSEPDRKAHLIVH) adopts a C2H2-type 1 zinc-finger fold. The C2H2-type 2; atypical zinc-finger motif lies at 29-52 (IICPFCKLSGINYNEMCFHIETAH). 2 consecutive C2H2-type zinc fingers follow at residues 153-176 (PECPFCGRIERYSQDMEIHVKTKH) and 192-214 (YDCPMCGLVCTNYHILQEHVDLH). The MIU stretch occupies residues 225 to 247 (DRVQCSSDRELAHQLQQEEERKR). Residues 231-261 (SDRELAHQLQQEEERKRKSEESRQEREEFQK) show a composition bias toward basic and acidic residues. A disordered region spans residues 231 to 262 (SDRELAHQLQQEEERKRKSEESRQEREEFQKL). The tract at residues 248-273 (KSEESRQEREEFQKLQRQYGLDNSGG) is zUBD/ZHA. K261 is subject to N6-acetyllysine. C359 acts as the Nucleophile in catalysis. Catalysis depends on H490, which acts as the Proton acceptor. D511 is a catalytic residue.

This sequence belongs to the peptidase C78 family. ZUFSP subfamily. In terms of assembly, interacts with RPA1 and RPA2.

The protein localises to the cytoplasm. Its subcellular location is the nucleus. The enzyme catalyses Thiol-dependent hydrolysis of ester, thioester, amide, peptide and isopeptide bonds formed by the C-terminal Gly of ubiquitin (a 76-residue protein attached to proteins as an intracellular targeting signal).. Its function is as follows. Deubiquitinase with endodeubiquitinase activity that specifically interacts with and cleaves 'Lys-63'-linked long polyubiquitin chains. Shows only weak activity against 'Lys-11' and 'Lys-48'-linked chains. Plays an important role in genome stability pathways, functioning to prevent spontaneous DNA damage and also promote cellular survival in response to exogenous DNA damage. Modulates the ubiquitination status of replication protein A (RPA) complex proteins in response to replication stress. This is Zinc finger-containing ubiquitin peptidase 1 from Rattus norvegicus (Rat).